The chain runs to 258 residues: Glutathione S-transferase DHAR3, chloroplastic (258 aa).

A chloroplast-targeting transit peptide spans 1 to 42 (MISLRFQPSTTAGVLSASVSRAGFIKRCGSTKPGRVGRFVTM). An S-glutathionyl cysteine modification is found at C52. K54 and D65 together coordinate glutathione. The L-ascorbate site is built by K54 and D65. In terms of domain architecture, GST N-terminal spans 56–129 (SITTPNKLGD…DVITQALEEK (74 aa)). Catalysis depends on C66, which acts as the Nucleophile. C66 and C69 are disulfide-bonded. The Glutathione-binding signature appears at 66-71 (CPFCQK). Positions 93, 106, 119, 205, and 252 each coordinate glutathione. Positions 130-258 (YPEPPLATPP…IAGWRPKVMG (129 aa)) constitute a GST C-terminal domain. K255 is an L-ascorbate binding site.

Belongs to the GST superfamily. DHAR family. Monomer. Interacts with TRX3. Post-translationally, partial S-glutathionylation and intramolecular disulfide bond formation between Cys-66 and Cys-69 in the presence of oxidized glutathione (GSSG). Could be reduced by TRX-dependent process.

It is found in the plastid. The protein resides in the chloroplast stroma. It carries out the reaction RX + glutathione = an S-substituted glutathione + a halide anion + H(+). It catalyses the reaction L-dehydroascorbate + 2 glutathione = glutathione disulfide + L-ascorbate. Displays a dual function. As a soluble protein, exhibits glutathione-dependent thiol transferase and dehydroascorbate (DHA) reductase activities. Key component of the ascorbate recycling system. Involved in the redox homeostasis, especially in scavenging of ROS under oxidative stresses. In Arabidopsis thaliana (Mouse-ear cress), this protein is Glutathione S-transferase DHAR3, chloroplastic (DHAR3).